Here is a 354-residue protein sequence, read N- to C-terminus: Multiple sugar-binding periplasmic receptor ChvE (354 aa).

Residues 1–25 form the signal peptide; the sequence is MKSIISLTAAAAIGVAMFVAPAFAA.

Belongs to the bacterial solute-binding protein 2 family.

It localises to the periplasm. Functionally, required for effective transcriptional induction of the vir genes by monosaccharides in response to plant signals and for normal growth and chemotaxis towards certain sugars. Functions as a periplasmic multiple sugar-binding receptor protein. It does not interact with a transport system. The polypeptide is Multiple sugar-binding periplasmic receptor ChvE (chvE) (Rhizobium radiobacter (Agrobacterium tumefaciens)).